We begin with the raw amino-acid sequence, 251 residues long: Methionine aminopeptidase (251 aa).

Residue histidine 77 coordinates substrate. Residues aspartate 94, aspartate 105, and histidine 169 each coordinate a divalent metal cation. Position 176 (histidine 176) interacts with substrate. A divalent metal cation contacts are provided by glutamate 202 and glutamate 233.

It belongs to the peptidase M24A family. Methionine aminopeptidase type 1 subfamily. As to quaternary structure, monomer. Co(2+) serves as cofactor. It depends on Zn(2+) as a cofactor. The cofactor is Mn(2+). Fe(2+) is required as a cofactor.

The enzyme catalyses Release of N-terminal amino acids, preferentially methionine, from peptides and arylamides.. Removes the N-terminal methionine from nascent proteins. The N-terminal methionine is often cleaved when the second residue in the primary sequence is small and uncharged (Met-Ala-, Cys, Gly, Pro, Ser, Thr, or Val). Requires deformylation of the N(alpha)-formylated initiator methionine before it can be hydrolyzed. This is Methionine aminopeptidase from Mycoplasma capricolum subsp. capricolum (strain California kid / ATCC 27343 / NCTC 10154).